A 147-amino-acid chain; its full sequence is Large ribosomal subunit protein bL9 (147 aa).

Belongs to the bacterial ribosomal protein bL9 family.

In terms of biological role, binds to the 23S rRNA. The protein is Large ribosomal subunit protein bL9 of Clostridium kluyveri (strain NBRC 12016).